A 305-amino-acid polypeptide reads, in one-letter code: tRNA pseudouridine synthase B (305 aa).

D41 acts as the Nucleophile in catalysis.

It belongs to the pseudouridine synthase TruB family. Type 1 subfamily.

It catalyses the reaction uridine(55) in tRNA = pseudouridine(55) in tRNA. Functionally, responsible for synthesis of pseudouridine from uracil-55 in the psi GC loop of transfer RNAs. This is tRNA pseudouridine synthase B from Prochlorococcus marinus subsp. pastoris (strain CCMP1986 / NIES-2087 / MED4).